A 497-amino-acid chain; its full sequence is Probable small intestine urate exporter (497 aa).

Residues Asn-47, Asn-56, Asn-66, Asn-75, and Asn-90 are each glycosylated (N-linked (GlcNAc...) asparagine). A run of 10 helical transmembrane segments spans residues 149 to 169 (SFLT…LIVL), 171 to 191 (IVQG…WVKW), 203 to 223 (IAGS…GLLC), 230 to 250 (YVFY…FPLI), 292 to 312 (LPLW…YTIM), 332 to 352 (ILSA…GLLA), 368 to 388 (KLFT…LPWV), 398 to 418 (FLVL…VNFL), 431 to 451 (LLQV…GFFI), and 461 to 481 (NVFL…LIFG).

The protein belongs to the major facilitator superfamily. Sodium/anion cotransporter family. Abundantly expressed in pancreas, liver, colon and small intestine, less in kidney. Not detected in the adrenal glands, brain, placenta, heart, testis, skeletal muscle, and lungs.

It localises to the apical cell membrane. The enzyme catalyses 3 Na(+)(out) + phosphate(out) = 3 Na(+)(in) + phosphate(in). The catalysed reaction is urate(out) + n chloride(in) = urate(in) + n chloride(out). It catalyses the reaction L-thyroxine(out) = L-thyroxine(in). It carries out the reaction 3,3',5-triiodo-L-thyronine(out) = 3,3',5-triiodo-L-thyronine(in). Acts as a membrane potential-dependent organic anion transporter, the transport requires a low concentration of chloride ions. Mediates chloride-dependent transport of urate. Mediates sodium-independent high affinity transport of thyroid hormones including L-thyroxine (T4) and 3,3',5-triiodo-L-thyronine (T3). Can actively transport inorganic phosphate into cells via Na(+) cotransport. The protein is Probable small intestine urate exporter (SLC17A4) of Homo sapiens (Human).